We begin with the raw amino-acid sequence, 57 residues long: Large ribosomal subunit protein uL30 (57 aa).

This sequence belongs to the universal ribosomal protein uL30 family. Part of the 50S ribosomal subunit.

The polypeptide is Large ribosomal subunit protein uL30 (Clostridium acetobutylicum (strain ATCC 824 / DSM 792 / JCM 1419 / IAM 19013 / LMG 5710 / NBRC 13948 / NRRL B-527 / VKM B-1787 / 2291 / W)).